We begin with the raw amino-acid sequence, 191 residues long: Ribosome maturation factor RimM (191 aa).

Residues threonine 99 to glycine 172 form the PRC barrel domain.

Belongs to the RimM family. In terms of assembly, binds ribosomal protein uS19.

Its subcellular location is the cytoplasm. Its function is as follows. An accessory protein needed during the final step in the assembly of 30S ribosomal subunit, possibly for assembly of the head region. Essential for efficient processing of 16S rRNA. May be needed both before and after RbfA during the maturation of 16S rRNA. It has affinity for free ribosomal 30S subunits but not for 70S ribosomes. This Bartonella bacilliformis (strain ATCC 35685 / KC583 / Herrer 020/F12,63) protein is Ribosome maturation factor RimM.